The sequence spans 222 residues: uncharacterized protein (222 aa).

Residues 8–77 (AKKNQIIYRY…NTPGYFVCKD (70 aa)) enclose the HTH gntR-type domain.

This is an uncharacterized protein from Mycoplasma genitalium (strain ATCC 33530 / DSM 19775 / NCTC 10195 / G37) (Mycoplasmoides genitalium).